Reading from the N-terminus, the 103-residue chain is Large ribosomal subunit protein uL24 (103 aa).

It belongs to the universal ribosomal protein uL24 family. As to quaternary structure, part of the 50S ribosomal subunit.

One of two assembly initiator proteins, it binds directly to the 5'-end of the 23S rRNA, where it nucleates assembly of the 50S subunit. Its function is as follows. One of the proteins that surrounds the polypeptide exit tunnel on the outside of the subunit. The sequence is that of Large ribosomal subunit protein uL24 from Actinobacillus pleuropneumoniae serotype 5b (strain L20).